Consider the following 194-residue polypeptide: Probable GTP-binding protein EngB (194 aa).

In terms of domain architecture, EngB-type G spans 22–194; that stretch reads LFLEVAFAGR…WQELDTMLNP (173 aa). GTP is bound by residues 30-37, 57-61, 75-78, 142-145, and 173-175; these read GRSNVGKS, GCTQL, DLPG, TKAD, and FSS. 2 residues coordinate Mg(2+): Ser-37 and Thr-59.

The protein belongs to the TRAFAC class TrmE-Era-EngA-EngB-Septin-like GTPase superfamily. EngB GTPase family. Mg(2+) serves as cofactor.

Its function is as follows. Necessary for normal cell division and for the maintenance of normal septation. In Desulforapulum autotrophicum (strain ATCC 43914 / DSM 3382 / VKM B-1955 / HRM2) (Desulfobacterium autotrophicum), this protein is Probable GTP-binding protein EngB.